Reading from the N-terminus, the 78-residue chain is Apolipoprotein C-I (78 aa).

The first 26 residues, 1-26 (MRLILCLPVLVVVLLMVLEGPAPAQG), serve as a signal peptide directing secretion.

This sequence belongs to the apolipoprotein C1 family.

It is found in the secreted. In terms of biological role, inhibitor of lipoprotein binding to the low density lipoprotein (LDL) receptor, LDL receptor-related protein, and very low density lipoprotein (VLDL) receptor. Associates with high density lipoproteins (HDL) and the triacylglycerol-rich lipoproteins in the plasma and makes up about 10% of the protein of the VLDL and 2% of that of HDL. Appears to interfere directly with fatty acid uptake and is also the major plasma inhibitor of cholesteryl ester transfer protein (CETP). Binds free fatty acids and reduces their intracellular esterification. Modulates the interaction of APOE with beta-migrating VLDL and inhibits binding of beta-VLDL to the LDL receptor-related protein. This is Apolipoprotein C-I (APOC1) from Acinonyx jubatus (Cheetah).